Consider the following 448-residue polypeptide: Divalent metal cation transporter MntH (448 aa).

Helical transmembrane passes span 41–61, 69–89, 117–137, 147–167, 176–196, 215–235, 270–290, 307–327, 363–383, 384–404, and 424–444; these read LFAFMGPGALIAVGYVDPGNW, SEFGYTLLSVILISNILAVLL, GFVLWILAELAIIATDIAEVI, FGIPLIWGVCITALDIFLVLF, IEVIVITLMVTILVCFGAEMV, IVTNPAMLYIALGILGATVMP, FSLTIALLINASILILAAAAF, LLNPTLGSSIASTVFAVALLA, VLAIVPAVIITALYGANGINE, LLIFSQVILSMQLSFAVIPLV, and IVSWSVAIFIAFLNIYLLFYT.

This sequence belongs to the NRAMP family.

It localises to the cell membrane. Functionally, h(+)-stimulated, divalent metal cation uptake system. This Listeria innocua serovar 6a (strain ATCC BAA-680 / CLIP 11262) protein is Divalent metal cation transporter MntH.